The chain runs to 263 residues: MYPFIPPARLLPGSPAPFLPSGPSCPQPSGPYPGPAVRVPGPTRSYVSTNVPFPELPRPNSAPTDPVGPLGTQGSMSSGPWAPGMGGQHPNVPYLFPESSPTPPLPVSGAPPVAWVTVPPGAWEPPAQYPTPEASYPSPGLQPSPNNPYPLPPGPSAASPGPGSLHRMNEIPGGSPSDSSNPESTLESTGQKKHLKLDNKSIKRRRSKKKSKRVTWGDIKTLTHKAESLGKQQGHNTTDPKMMLLCLMTMLHVNSQHESEGSK.

Residues 13–238 (GSPAPFLPSG…LGKQQGHNTT (226 aa)) are disordered. Composition is skewed to pro residues over residues 14–34 (SPAP…PYPG) and 140–155 (GLQP…PPGP). Over residues 156-165 (SAASPGPGSL) the composition is skewed to low complexity. The segment covering 176-189 (PSDSSNPESTLEST) has biased composition (polar residues). A compositionally biased stretch (basic residues) spans 202 to 213 (IKRRRSKKKSKR).

It belongs to the MISS family. In terms of assembly, interacts with MAPK1. Post-translationally, phosphorylated in vitro by MAPK1.

It localises to the cytoplasm. The protein resides in the cytoskeleton. Its subcellular location is the spindle. In terms of biological role, involved in the maintenance of the spindle integrity during the cytostatic factor (CSF) arrest of oocytes. The protein is MAPK-interacting and spindle-stabilizing protein (Mapk1ip1) of Mus musculus (Mouse).